A 1031-amino-acid chain; its full sequence is Probable ATP-dependent RNA helicase DDX46 (1031 aa).

The segment covering 1 to 24 (MGRESRHYRKRSASRGRSGSRSRS) has biased composition (basic residues). A disordered region spans residues 1 to 228 (MGRESRHYRK…EMEGEELDPL (228 aa)). Gly2 is lipidated: N-myristoyl glycine. Over residues 26–49 (SPSDKRSKRGDDRRSRSRDRDRRR) the composition is skewed to basic and acidic residues. Basic residues-rich tracts occupy residues 50–73 (ERSR…RSRS) and 81–103 (ERRR…RRSR). The span at 112–200 (KKTENRSRSK…EMKQGKKWSL (89 aa)) shows a compositional bias: basic and acidic residues. Residues 152-197 (DQNKLEEEMRKRKERVEKWREEQRKKAMENIGELKKEIEEMKQGKK) adopt a coiled-coil conformation. Residue Lys186 forms a Glycyl lysine isopeptide (Lys-Gly) (interchain with G-Cter in SUMO2) linkage. At Ser199 the chain carries Phosphoserine. Acidic residues-rich tracts occupy residues 201-211 (EDDDDDEDDPA) and 219-228 (EMEGEELDPL). Residue Lys263 is modified to N6-acetyllysine. At Tyr294 the chain carries Phosphotyrosine. Residues Ser295 and Ser296 each carry the phosphoserine modification. Lys325 participates in a covalent cross-link: Glycyl lysine isopeptide (Lys-Gly) (interchain with G-Cter in SUMO2). At Ser346 the chain carries Phosphoserine. Positions 372–400 (KSWVQCGISMKILNSLKKHGYEKPTPIQT) match the Q motif motif. The Helicase ATP-binding domain occupies 403-581 (IPAIMSGRDL…RRILSKPIEV (179 aa)). Position 416-423 (416-423 (AKTGSGKT)) interacts with ATP. The short motif at 529–532 (DEAD) is the DEAD box element. One can recognise a Helicase C-terminal domain in the interval 592 to 753 (DVEQQVIVIE…AVPPDLEKLW (162 aa)). Lys776 carries the N6-acetyllysine modification. A Glycyl lysine isopeptide (Lys-Gly) (interchain with G-Cter in SUMO2) cross-link involves residue Lys779. Ser804 is subject to Phosphoserine. The residue at position 903 (Lys903) is an N6-acetyllysine. Glycyl lysine isopeptide (Lys-Gly) (interchain with G-Cter in SUMO2) cross-links involve residues Lys907 and Lys915. Ser928 carries the phosphoserine modification.

Belongs to the DEAD box helicase family. DDX46/PRP5 subfamily. In terms of assembly, component of the 17S U2 SnRNP complex, a ribonucleoprotein complex that contains small nuclear RNA (snRNA) U2 and a number of specific proteins. Within the 17S U2 SnRNP complex, DDX46 is part of the SF3B subcomplex, which is required for 'A' complex assembly formed by the stable binding of U2 snRNP to the branchpoint sequence in pre-mRNA. Recruited to the 17S U2 SnRNP complex following release of DDX42; DDX42 and DDX46 bind the SF3B subcomplex in a competitive manner.

The protein resides in the nucleus speckle. Its subcellular location is the nucleus. It is found in the cajal body. The enzyme catalyses ATP + H2O = ADP + phosphate + H(+). In terms of biological role, component of the 17S U2 SnRNP complex of the spliceosome, a large ribonucleoprotein complex that removes introns from transcribed pre-mRNAs. The 17S U2 SnRNP complex (1) directly participates in early spliceosome assembly and (2) mediates recognition of the intron branch site during pre-mRNA splicing by promoting the selection of the pre-mRNA branch-site adenosine, the nucleophile for the first step of splicing. Within the 17S U2 SnRNP complex, DDX46 plays essential roles during assembly of pre-spliceosome and proofreading of the branch site. In Homo sapiens (Human), this protein is Probable ATP-dependent RNA helicase DDX46.